The following is a 286-amino-acid chain: 3-hydroxyanthranilate 3,4-dioxygenase (286 aa).

The interval 1-160 (MERPVRVKAW…SEQYRTGKPN (160 aa)) is domain A (catalytic). Arg43 provides a ligand contact to O2. Fe cation-binding residues include His47, Glu53, and His91. Substrate is bound at residue Glu53. Substrate is bound by residues Arg95 and Glu105. The segment at 161 to 177 (PDQLLKEPPFPLSTRSV) is linker. The segment at 178–286 (MEPMCLEAWL…QDPACKKSLG (109 aa)) is domain B.

This sequence belongs to the 3-HAO family. As to quaternary structure, monomer. Fe(2+) serves as cofactor.

The protein resides in the cytoplasm. Its subcellular location is the cytosol. It carries out the reaction 3-hydroxyanthranilate + O2 = (2Z,4Z)-2-amino-3-carboxymuconate 6-semialdehyde. Its pathway is cofactor biosynthesis; NAD(+) biosynthesis; quinolinate from L-kynurenine: step 3/3. In terms of biological role, catalyzes the oxidative ring opening of 3-hydroxyanthranilate to 2-amino-3-carboxymuconate semialdehyde, which spontaneously cyclizes to quinolinate. This Bos taurus (Bovine) protein is 3-hydroxyanthranilate 3,4-dioxygenase.